Here is a 407-residue protein sequence, read N- to C-terminus: Aspartokinase (407 aa).

7-10 (KFGG) is a binding site for ATP. 25-30 (RVIEEV) serves as a coordination point for substrate. Ser41 is an ATP binding site. Substrate contacts are provided by residues 47-49 (TDE), Glu74, 125-126 (LD), 150-153 (RGGS), and Ser153. ATP contacts are provided by residues 173-174 (TD) and 179-184 (FTTDPR). ACT domains lie at 264–338 (VTVV…LAKV) and 340–407 (IVGS…AVRS). Substrate contacts are provided by residues 289–291 (NVD), Gln295, 351–352 (VA), 365–366 (EI), and 372–373 (SE).

It belongs to the aspartokinase family. Tetramer consisting of 2 isoforms Alpha (catalytic and regulation) and of a homodimer of 2 isoforms Beta (regulation).

It carries out the reaction L-aspartate + ATP = 4-phospho-L-aspartate + ADP. It participates in amino-acid biosynthesis; L-lysine biosynthesis via DAP pathway; (S)-tetrahydrodipicolinate from L-aspartate: step 1/4. Its pathway is amino-acid biosynthesis; L-methionine biosynthesis via de novo pathway; L-homoserine from L-aspartate: step 1/3. The protein operates within amino-acid biosynthesis; L-threonine biosynthesis; L-threonine from L-aspartate: step 1/5. Its activity is regulated as follows. Lysine-sensitive. In terms of biological role, catalyzes the phosphorylation of the beta-carboxyl group of aspartic acid with ATP to yield 4-phospho-L-aspartate, which is involved in the branched biosynthetic pathway leading to the biosynthesis of amino acids threonine, isoleucine and methionine. The protein is Aspartokinase (lysC) of Geobacillus stearothermophilus (Bacillus stearothermophilus).